Consider the following 216-residue polypeptide: DNA-binding protein HupB (216 aa).

Glycine 2 is a propeptide (removed; alternate). An N-acetylmethionine modification is found at methionine 3. The segment at 3-92 (MNKAELIDVL…PGAQFKAVVS (90 aa)) is bacterial histone-like domain. An N6-acetyllysine mark is found at lysine 5, lysine 74, lysine 88, lysine 105, lysine 118, and lysine 135. Residues 102–216 (PAVKRGVGAS…KKATARRGRK (115 aa)) form a disordered region. Residues 103-216 (AVKRGVGASA…KKATARRGRK (114 aa)) are degenerate repeats region. The segment covering 104–114 (VKRGVGASAAK) has biased composition (low complexity). Basic residues predominate over residues 115–216 (KVAKKAPAKK…KKATARRGRK (102 aa)). N6,N6,N6-trimethyllysine is present on lysine 140. N6-acetyllysine occurs at positions 148 and 169.

The protein belongs to the bacterial histone-like protein family. Long actinobacterial subfamily. In terms of assembly, oligomerizes. Interacts with topoisomerase 1 (topA). Interacts with Eis. Interacts with antigen 85 proteins (fbpA, fbpB, fbpC). Post-translationally, probably acetylated by Eis in vivo. In vitro acetylated by Eis (strain H37Rv and H37Ra) on many more residues than those identified in vivo. Deacetylated in vitro by NAD-dependent protein deacylase (Rv1151c). In terms of processing, trimethylated on Lys-140 by human SUV39H1; trimethylation inhibits mycobacterial growth. SUV39H1 probably also trimethylates another residue. Probably succinylated by Rv0802c and desuccinylated by NAD-dependent protein deacylase (Rv1151c).

The protein localises to the cytoplasm. Its subcellular location is the nucleoid. The protein resides in the secreted. It localises to the cell wall. The catalysed reaction is 4 Fe(2+) + O2 + 4 H(+) = 4 Fe(3+) + 2 H2O. Its function is as follows. A nucleoid-associated protein (NAP) that probably plays a role in chromosome compactation. Binds DNA non-specifically, with greater affinity for supercoiled than linear DNA, binds well to nicked DNA, gapped and cruciform DNA. Has a preference for A:T rich DNA. Required for activation of the mtbB operon. Binds the mtbB promoter in the presence of iron, binding is seen with as little as 25 uM Fe(2+) and increases with increasing Fe(2+). RNase E and HupB jointly contribute to cellular adaptation to changing growth conditions and survival during antibiotic treatment and in the host. Plays a role in stress survival. Stimulates supercoiling relaxation by topoisomerase 1 (Top1, topA). Functionally, binds Fe(3+) but not Fe(2+). Has ferroxidase activity, converts Fe(2+) into Fe(3+) and in the presence of H(2)O(2) prevents the generation of hydroxyl radicals (the Fenton reaction). Protects DNA from damage in the presence of FeSO(4) and H(2)O(2). May function in iron storage. Involved in iron uptake by bacteria (either Fe(3+) or extracellular carboxymycobactin); antibodies against HupB block uptake of both. Following uptake iron is mostly found in the iron siderophores carboxymycobactin (CMb, extracellular) or mycobactin (Mb, lipophilic). Facilitates transfer of iron from CMb to Mb when liposomes plus a cell wall lysate are incubated with CMb. Binds iron, ferri-CMb and ferri-Mb; has 10-fold higher affinity for ferri-Mb. Suggested to transfer iron from CBm to Mb at the cell membrane. In terms of biological role, required for biofilm formation; trimethylation by recombinant human SUV39H1 (a histone methyltransferase) inhibits biofilm formation. Induces lymphoproliferation, particularly in health tuberculin reactors, and is immunogenic. Maybe involved in pathogenesis of inflammatory bowel disease (IBD) in patients with ulcerative colitis and Crohn disease (CD). Bound by anti-neutrophil cytoplasmic antibodies (pANCA), which are a hallmark of IBD. The binding is due to pANCA directed against H1-3 cross-reacting with DBH epitopes. In CD, target of a strong IgA response. May play a role in cell wall assembly. In vitro at low levels enhances formation of TMM and TDM by antigen 85 proteins (fbpA, fbpB, fbpC), at higher levels inhibits TMM and TDM formation. The protein is DNA-binding protein HupB of Mycobacterium tuberculosis (strain ATCC 25618 / H37Rv).